Consider the following 274-residue polypeptide: Large ribosomal subunit protein uL2cz/uL2cy (274 aa).

2 disordered regions span residues 1 to 22 and 224 to 274; these read MAIN…DSQV and NPVD…RRSK.

This sequence belongs to the universal ribosomal protein uL2 family. As to quaternary structure, part of the 50S ribosomal subunit.

It is found in the plastid. The protein resides in the chloroplast. This is Large ribosomal subunit protein uL2cz/uL2cy (rpl2-A) from Helianthus annuus (Common sunflower).